The sequence spans 548 residues: MNEPTVQPSRTSSAPASPASPRGWSDFCEQHAAAAARELARQYWLFARAHPQPPRADLVSLQFAELFQRHFCREVRESLAGPPGHDYRATAPPRPALPKARSSEDLGPRPACALQHLRRGLRQLFRRRSAGELPGATSDTNDIDTTAASRPGPARKLLPWGLREPPTEALKEVVLRYSLADEAAMDSGARWQRGRLVLRSPGPGHSHFLQLFDPPKSSKPKLQEACSSIREVRPCTRLEMPDNLYTFVLKVQDQTDIIFEVGDEQQLNSWLAELRASTGLGLEHPDTELPLSLAAEPGPARSPRGSTDSLDQGASPGVLLDPACQKTDHFLSCYPWFHGPISRVRAAQLVQLQGPDAHGVFLVRQSESRRGEYVLTFNLQGRAKHLRLVLTERGQCRVQHLHFPSVVDMLRHFQRSPIPLECGAACDVRLSGYVVVLSQAPGSSNTVLFPFSLPHWDSELGHPHLSSVGCPPSHGAEALPGQVTPPEQIFHLVPSPEELANSLRQLELESVSSARDSDYDMDSSSRGHLRAIDNQYTPLSQLCREADV.

Polar residues predominate over residues 1–11 (MNEPTVQPSRT). Disordered regions lie at residues 1-25 (MNEP…RGWS), 78-108 (SLAG…DLGP), and 128-160 (RSAG…LLPW). Residues 12 to 21 (SSAPASPASP) are compositionally biased toward low complexity. Phosphoserine is present on residues Ser-13, Ser-102, and Ser-129. The span at 137 to 148 (TSDTNDIDTTAA) shows a compositional bias: polar residues. The 112-residue stretch at 168-279 (EALKEVVLRY…WLAELRASTG (112 aa)) folds into the PH domain. Residues 290–313 (PLSLAAEPGPARSPRGSTDSLDQG) form a disordered region. At Ser-302 the chain carries Phosphoserine. Residues 336–434 (WFHGPISRVR…ACDVRLSGYV (99 aa)) form the SH2 domain.

The protein belongs to the SH2B adapter family. Post-translationally, tyrosine phosphorylated.

Its function is as follows. Links T-cell receptor activation signal to phospholipase C-gamma-1, GRB2 and phosphatidylinositol 3-kinase. This Mus musculus (Mouse) protein is SH2B adapter protein 3 (Sh2b3).